The primary structure comprises 231 residues: Ribose-5-phosphate isomerase A (231 aa).

Substrate contacts are provided by residues 32 to 35 (TGST), 85 to 88 (DGAD), and 98 to 101 (KGGG). The active-site Proton acceptor is Glu-107. Lys-125 serves as a coordination point for substrate.

Belongs to the ribose 5-phosphate isomerase family. Homodimer.

The enzyme catalyses aldehydo-D-ribose 5-phosphate = D-ribulose 5-phosphate. It participates in carbohydrate degradation; pentose phosphate pathway; D-ribose 5-phosphate from D-ribulose 5-phosphate (non-oxidative stage): step 1/1. Catalyzes the reversible conversion of ribose-5-phosphate to ribulose 5-phosphate. The protein is Ribose-5-phosphate isomerase A of Paraburkholderia phytofirmans (strain DSM 17436 / LMG 22146 / PsJN) (Burkholderia phytofirmans).